Consider the following 287-residue polypeptide: Ciliary microtubule inner protein 6 (287 aa).

Composition is skewed to basic and acidic residues over residues 1-15 and 25-34; these read MEEK…KIED and EEIKHEEKPG. The interval 1-42 is disordered; it reads MEEKEDKHQQHKIEDAAITYVSENEEIKHEEKPGKSIHHSKS. Residues 128-160 form a mn 1 region; it reads GIVPLASPGTSAELQNNFIEYISFIHQYDARKT. The disordered stretch occupies residues 179-287; that stretch reads KPGSRPTVPK…PLNPPIKKSE (109 aa). 2 stretches are compositionally biased toward basic and acidic residues: residues 203–212 and 232–245; these read EQSKKTEKGN and LEPK…DVRQ. Residues 213-246 are mn 2; it reads SAESRMISPGLCQQNSQELLEPKTHLSETDVRQA.

It localises to the cell projection. The protein localises to the cilium. The protein is Ciliary microtubule inner protein 6 of Homo sapiens (Human).